Reading from the N-terminus, the 101-residue chain is CRISPR-associated endoribonuclease Cas2 (101 aa).

Position 17 (Asp17) interacts with Mg(2+).

It belongs to the CRISPR-associated endoribonuclease Cas2 protein family. As to quaternary structure, homodimer, forms a heterotetramer with a Cas1 homodimer. Mg(2+) serves as cofactor.

CRISPR (clustered regularly interspaced short palindromic repeat), is an adaptive immune system that provides protection against mobile genetic elements (viruses, transposable elements and conjugative plasmids). CRISPR clusters contain sequences complementary to antecedent mobile elements and target invading nucleic acids. CRISPR clusters are transcribed and processed into CRISPR RNA (crRNA). Functions as a ssRNA-specific endoribonuclease. Involved in the integration of spacer DNA into the CRISPR cassette. This Methanopyrus kandleri (strain AV19 / DSM 6324 / JCM 9639 / NBRC 100938) protein is CRISPR-associated endoribonuclease Cas2.